We begin with the raw amino-acid sequence, 305 residues long: Ribonuclease BN (305 aa).

7 residues coordinate Zn(2+): H64, H66, D68, H69, H141, D212, and H270. The Proton acceptor role is filled by D68.

It belongs to the RNase Z family. RNase BN subfamily. As to quaternary structure, homodimer. The cofactor is Zn(2+).

In terms of biological role, zinc phosphodiesterase, which has both exoribonuclease and endoribonuclease activities. The protein is Ribonuclease BN of Citrobacter koseri (strain ATCC BAA-895 / CDC 4225-83 / SGSC4696).